The following is a 1405-amino-acid chain: DNA-directed RNA polymerase subunit beta' (1405 aa).

Zn(2+) contacts are provided by C70, C72, C85, and C88. Mg(2+) contacts are provided by D460, D462, and D464. Residues C814, C888, C895, and C898 each coordinate Zn(2+).

Belongs to the RNA polymerase beta' chain family. In terms of assembly, the RNAP catalytic core consists of 2 alpha, 1 beta, 1 beta' and 1 omega subunit. When a sigma factor is associated with the core the holoenzyme is formed, which can initiate transcription. Mg(2+) is required as a cofactor. The cofactor is Zn(2+).

It carries out the reaction RNA(n) + a ribonucleoside 5'-triphosphate = RNA(n+1) + diphosphate. DNA-dependent RNA polymerase catalyzes the transcription of DNA into RNA using the four ribonucleoside triphosphates as substrates. The sequence is that of DNA-directed RNA polymerase subunit beta' from Shewanella sp. (strain ANA-3).